A 204-amino-acid chain; its full sequence is Cytochrome c oxidase subunit 3 (204 aa).

5 consecutive transmembrane segments (helical) span residues 12-32, 56-76, 101-121, 133-153, and 171-191; these read YGNL…IQWW, GMML…WAYF, FQIP…VTWA, AIHS…LQMM, and FFVA…FLFM.

The protein belongs to the cytochrome c oxidase subunit 3 family. As to quaternary structure, component of the cytochrome c oxidase (complex IV, CIV), a multisubunit enzyme composed of a catalytic core of 3 subunits and several supernumerary subunits. The complex exists as a monomer or a dimer and forms supercomplexes (SCs) in the inner mitochondrial membrane with ubiquinol-cytochrome c oxidoreductase (cytochrome b-c1 complex, complex III, CIII).

It is found in the mitochondrion inner membrane. It catalyses the reaction 4 Fe(II)-[cytochrome c] + O2 + 8 H(+)(in) = 4 Fe(III)-[cytochrome c] + 2 H2O + 4 H(+)(out). Functionally, component of the cytochrome c oxidase, the last enzyme in the mitochondrial electron transport chain which drives oxidative phosphorylation. The respiratory chain contains 3 multisubunit complexes succinate dehydrogenase (complex II, CII), ubiquinol-cytochrome c oxidoreductase (cytochrome b-c1 complex, complex III, CIII) and cytochrome c oxidase (complex IV, CIV), that cooperate to transfer electrons derived from NADH and succinate to molecular oxygen, creating an electrochemical gradient over the inner membrane that drives transmembrane transport and the ATP synthase. Cytochrome c oxidase is the component of the respiratory chain that catalyzes the reduction of oxygen to water. Electrons originating from reduced cytochrome c in the intermembrane space (IMS) are transferred via the dinuclear copper A center (CU(A)) of subunit 2 and heme A of subunit 1 to the active site in subunit 1, a binuclear center (BNC) formed by heme A3 and copper B (CU(B)). The BNC reduces molecular oxygen to 2 water molecules using 4 electrons from cytochrome c in the IMS and 4 protons from the mitochondrial matrix. This Enteroctopus dofleini (North Pacific giant octopus) protein is Cytochrome c oxidase subunit 3 (COIII).